The primary structure comprises 199 residues: GTP cyclohydrolase-2 (199 aa).

49–53 (RVHSE) provides a ligand contact to GTP. Positions 54, 65, and 67 each coordinate Zn(2+). GTP is bound by residues Gln70, 92–94 (EGR), and Thr114. Catalysis depends on Asp126, which acts as the Proton acceptor. Catalysis depends on Arg128, which acts as the Nucleophile. GTP-binding residues include Thr149 and Lys154.

It belongs to the GTP cyclohydrolase II family. It depends on Zn(2+) as a cofactor.

The catalysed reaction is GTP + 4 H2O = 2,5-diamino-6-hydroxy-4-(5-phosphoribosylamino)-pyrimidine + formate + 2 phosphate + 3 H(+). Its pathway is cofactor biosynthesis; riboflavin biosynthesis; 5-amino-6-(D-ribitylamino)uracil from GTP: step 1/4. Functionally, catalyzes the conversion of GTP to 2,5-diamino-6-ribosylamino-4(3H)-pyrimidinone 5'-phosphate (DARP), formate and pyrophosphate. The sequence is that of GTP cyclohydrolase-2 from Baumannia cicadellinicola subsp. Homalodisca coagulata.